The chain runs to 191 residues: MKLVVGLGNPGPEYAATRHNIGFLVAQKFAQQMGVSLKRQAYQGIVGTGRADGQETMVLLPQTYMNRSGVSVVSACKSKGIAVEDVVVIHDEIDLPFGSIRIKVGGGHGGHNGLRSIVDLLGCRDFLRVRMGVGRPQGQVDVAKYVLGQFSSTEKSQLDNVLENSVKALEVLLQKGAQQAMNEFNNRVFLI.

Position 14 (Tyr-14) interacts with tRNA. His-19 serves as the catalytic Proton acceptor. TRNA-binding residues include Tyr-64, Asn-66, and Asn-112.

The protein belongs to the PTH family. As to quaternary structure, monomer.

Its subcellular location is the cytoplasm. It catalyses the reaction an N-acyl-L-alpha-aminoacyl-tRNA + H2O = an N-acyl-L-amino acid + a tRNA + H(+). Hydrolyzes ribosome-free peptidyl-tRNAs (with 1 or more amino acids incorporated), which drop off the ribosome during protein synthesis, or as a result of ribosome stalling. In terms of biological role, catalyzes the release of premature peptidyl moieties from peptidyl-tRNA molecules trapped in stalled 50S ribosomal subunits, and thus maintains levels of free tRNAs and 50S ribosomes. In Syntrophotalea carbinolica (strain DSM 2380 / NBRC 103641 / GraBd1) (Pelobacter carbinolicus), this protein is Peptidyl-tRNA hydrolase.